We begin with the raw amino-acid sequence, 159 residues long: Ankyrin repeat domain-containing protein 37 (159 aa).

3 ANK repeats span residues M1–A25, Q30–Q59, and L63–V92. The Nuclear localization signal motif lies at E130–V150.

In terms of processing, ubiquitinated by the CRL2(FEM1B) complex, leading to its degradation. Expressed testis, ovary, uterus, kidney, liver, but not in other tissues.

The protein resides in the nucleus. It is found in the cytoplasm. The polypeptide is Ankyrin repeat domain-containing protein 37 (Mus musculus (Mouse)).